Consider the following 188-residue polypeptide: Protein SYC1 (188 aa).

In terms of assembly, component of the cleavage and polyadenylation factor (CPF) complex, which is composed of at least PTI1, SYC1, SSU72, GLC7, MPE1, REF2, PFS2, PTA1, YSH1/BRR5, SWD2, CFT2/YDH1, YTH1, CFT1/YHH1, FIP1 and PAP1. Component of the APT complex, which is a subcomplex of CPF, and is composed of PTI1, SYC1, SSU72, GLC7, REF2, PTA1 and SWD2.

The protein localises to the nucleus. Functionally, component of the cleavage and polyadenylation factor (CPF) complex, which plays a key role in polyadenylation-dependent pre-mRNA 3'-end formation and cooperates with cleavage factors including the CFIA complex and NAB4/CFIB. Component of the APT complex, which may be involved in polyadenylation-independent transcript 3'-end formation, including snoRNAs and snRNAs. The protein is Protein SYC1 (SYC1) of Saccharomyces cerevisiae (strain ATCC 204508 / S288c) (Baker's yeast).